The primary structure comprises 418 residues: UDP-N-acetylglucosamine 1-carboxyvinyltransferase 1 (418 aa).

Residue 22–23 (KN) coordinates phosphoenolpyruvate. UDP-N-acetyl-alpha-D-glucosamine is bound at residue arginine 94. The active-site Proton donor is cysteine 118. Cysteine 118 carries the 2-(S-cysteinyl)pyruvic acid O-phosphothioketal modification. UDP-N-acetyl-alpha-D-glucosamine contacts are provided by residues 123 to 127 (RPIDL), aspartate 306, and isoleucine 328.

It belongs to the EPSP synthase family. MurA subfamily.

Its subcellular location is the cytoplasm. It carries out the reaction phosphoenolpyruvate + UDP-N-acetyl-alpha-D-glucosamine = UDP-N-acetyl-3-O-(1-carboxyvinyl)-alpha-D-glucosamine + phosphate. Its pathway is cell wall biogenesis; peptidoglycan biosynthesis. In terms of biological role, cell wall formation. Adds enolpyruvyl to UDP-N-acetylglucosamine. The protein is UDP-N-acetylglucosamine 1-carboxyvinyltransferase 1 of Clostridium acetobutylicum (strain ATCC 824 / DSM 792 / JCM 1419 / IAM 19013 / LMG 5710 / NBRC 13948 / NRRL B-527 / VKM B-1787 / 2291 / W).